Here is a 131-residue protein sequence, read N- to C-terminus: Profilin (131 aa).

Belongs to the profilin family. In terms of assembly, occurs in many kinds of cells as a complex with monomeric actin in a 1:1 ratio.

It localises to the cytoplasm. The protein localises to the cytoskeleton. In terms of biological role, binds to actin and affects the structure of the cytoskeleton. At high concentrations, profilin prevents the polymerization of actin, whereas it enhances it at low concentrations. By binding to PIP2, it inhibits the formation of IP3 and DG. The sequence is that of Profilin from Prunus persica (Peach).